A 374-amino-acid chain; its full sequence is Probable neutral protease 2 homolog ARB_00849 (374 aa).

An N-terminal signal peptide occupies residues 1 to 19 (MKFLTALSAIGALVATATA). Residues 20 to 189 (AAVPNTPAKQ…KKSRGTIDKR (170 aa)) constitute a propeptide that is removed on maturation. Cystine bridges form between cysteine 197–cysteine 268 and cysteine 275–cysteine 293. Position 318 (histidine 318) interacts with Zn(2+). The active site involves glutamate 319. Residues histidine 322 and aspartate 333 each coordinate Zn(2+).

It belongs to the peptidase M35 family. Zn(2+) is required as a cofactor.

It is found in the secreted. It catalyses the reaction Preferential cleavage of bonds with hydrophobic residues in P1'. Also 3-Asn-|-Gln-4 and 8-Gly-|-Ser-9 bonds in insulin B chain.. Probable secreted metalloprotease that shows high activities on basic nuclear substrates such as histone and protamine. May be involved in virulence. In Arthroderma benhamiae (strain ATCC MYA-4681 / CBS 112371) (Trichophyton mentagrophytes), this protein is Probable neutral protease 2 homolog ARB_00849.